Consider the following 568-residue polypeptide: MKFLPTTKEEMKNLGWDSIDVLLISGDTYLDTSYNGSVLVGKWLVEHGFKVGIIAQPEVDVPDDITRLGEPNLFFAVSGGCVDSMVANYTATKKRRQQDDFTPGGVNNKRPDRAVLVYSNMIRRFFKGTTKKIVISGIESSLRRITHYDYWTNKLRKPILFDAKADILSYGMGEMSMLQLANALKNGEDWKNIKGLCYLSKEMKQDYLSLPSHSECLADKDNFIEAFHTFYLNCDPITAKGLCQKCDDRYLIQNPPSESYSEEIMDKIYSMEFARDVHPYYKKMGAVRALDTIKYSVTTHRGCYGECNFCAIAIHQGRTIMSRSQSSIVEEVKNIAGTPKFHGNISDVGGPTANMYGLECKKKLKLGACPDRRCLYPKKCLHLQVNHNNQVELLKKLKKIPNIKKIFIASGIRYDMILDDNKCGQMYLKEIIKDHISGQMKIAPEHTEDKILGLMGKDGKSCLNEFKNQFYKINNELGKKQFLTYYLIAAHPGCKDKDMMDLKRYASQELRVNPEQVQIFTPTPSTYSTLMYYTEKDPFTNQKLFVEKDNGKKQKQKDIVTEKRKNRK.

Residues 289-562 (ALDTIKYSVT…KQKQKDIVTE (274 aa)) form the Radical SAM core domain. The [4Fe-4S] cluster site is built by C303, C307, and C310. The tract at residues 546-568 (VEKDNGKKQKQKDIVTEKRKNRK) is disordered.

Belongs to the UPF0313 family. It depends on [4Fe-4S] cluster as a cofactor.

The chain is UPF0313 protein FN0734 from Fusobacterium nucleatum subsp. nucleatum (strain ATCC 25586 / DSM 15643 / BCRC 10681 / CIP 101130 / JCM 8532 / KCTC 2640 / LMG 13131 / VPI 4355).